The chain runs to 763 residues: Ethylene receptor 2 (763 aa).

3 helical membrane passes run 58-78 (FLIA…ATCS), 86-106 (IVLQ…ITMF), and 115-135 (VVLA…ATAI). Cu cation-binding residues include Cys97 and His101. Residues 190–339 (DRHTILYTTM…VVADQVAVAL (150 aa)) form the GAF domain. The region spanning 382-615 (AMYDGMRRPM…TIMLALQFQL (234 aa)) is the Histidine kinase domain. The Response regulatory domain maps to 641 to 760 (QVILVDSDDT…ALGDELYRVL (120 aa)). Position 692 is a 4-aspartylphosphate (Asp692).

The protein belongs to the ethylene receptor family. Requires Cu cation as cofactor. In terms of processing, autophosphorylated on serine, threonine and tyrosine residues.

It localises to the endoplasmic reticulum membrane. The catalysed reaction is ATP + protein L-histidine = ADP + protein N-phospho-L-histidine.. Ethylene receptor related to bacterial two-component regulators. Acts as a negative regulator of ethylene signaling. May delay the transition from the vegetative stage to the floral stage by up-regulating GI (GIGANTEA) and RCN1 and cause starch accumulation in stems by down-regulating the alpha-amylase AMY3D. This Oryza sativa subsp. japonica (Rice) protein is Ethylene receptor 2.